The following is a 371-amino-acid chain: Trans-enoyl reductase mycC (371 aa).

51–54 (CDWK) serves as a coordination point for NADP(+). Substrate is bound at residue 140-147 (CVVGTVGL). Residues 182 to 185 (STAS), 205 to 208 (SPAN), tyrosine 223, and 270 to 271 (FE) each bind NADP(+). 291–295 (GIRLL) serves as a coordination point for substrate. 361–362 (VS) contacts NADP(+).

This sequence belongs to the zinc-containing alcohol dehydrogenase family. As to quaternary structure, monomer.

The enzyme catalyses L-leucine + 8 malonyl-CoA + 4 S-adenosyl-L-methionine + ATP + 9 NADPH + 12 H(+) = (5S)-5-(2-methylpropyl)-3-[(2E,6R,8E,10E,12E)-6,8,10,12-tetramethyltetradeca-2,8,10,12-tetraenoyl]-2,5-dihydro-1H-pyrrol-2-one + AMP + 4 S-adenosyl-L-homocysteine + 8 CO2 + diphosphate + 9 NADP(+) + 8 CoA + 7 H2O. Its pathway is mycotoxin biosynthesis. Trans-enoyl reductase; part of the gene cluster that mediates the biosynthesis of myceliothermophins, mycotoxins that contain a trans-fused decalin ring system connected to a conjugated 3-pyrrolin-2-one moiety and that have potential anti-tumor properties. The polyketide synthase module (PKS) of the PKS-NRPS mycA is responsible for the synthesis of the octaketide backbone. The downstream nonribosomal peptide synthetase (NRPS) module then amidates the carboxyl end of the octaketide with a leucine. A reductase-like domain (R) at the C-terminus catalyzes the reductive release of the polyketide-amino acid intermediate. Because mycA lacks a designated enoylreductase (ER) domain, the required activity is provided the enoyl reductase mycC. Following mycA-catalyzed construction and release of aminoacyl polyketide aldehyde, Knoevenagel condensation yields the expected ketone. This C18 keto acyclic precursor is the substrate of the Diels-Alderase mycB, that catalyzes the Diels-Alder cycloaddition to produce myceliothermophin E. A yet unknown oxygenase involved in the production of myceliothermophin A, via substitution with a hydroxyl group at the C21, has still to be identified. The sequence is that of Trans-enoyl reductase mycC from Thermothelomyces thermophilus (strain ATCC 42464 / BCRC 31852 / DSM 1799) (Sporotrichum thermophile).